Reading from the N-terminus, the 350-residue chain is Kelch domain-containing protein 9 (350 aa).

Kelch repeat units follow at residues Arg-39–Gly-89, Trp-91–Cys-137, and Gln-325–Ile-350.

Interacts with CCNA1.

This chain is Kelch domain-containing protein 9 (Klhdc9), found in Mus musculus (Mouse).